The chain runs to 254 residues: CRISPR-associated endoribonuclease Cas6 1 (254 aa).

The active-site Proton acceptor is the Y32. The active-site Proton donor is the H47.

This sequence belongs to the CRISPR-associated protein Cas6/Cse3/CasE family.

In terms of biological role, CRISPR (clustered regularly interspaced short palindromic repeat) is an adaptive immune system that provides protection against mobile genetic elements (viruses, transposable elements and conjugative plasmids). CRISPR clusters contain sequences complementary to antecedent mobile elements and target invading nucleic acids. CRISPR clusters are transcribed and processed into CRISPR RNA (crRNA). This protein processes pre-crRNA into individual crRNA units. This Methanocaldococcus jannaschii (strain ATCC 43067 / DSM 2661 / JAL-1 / JCM 10045 / NBRC 100440) (Methanococcus jannaschii) protein is CRISPR-associated endoribonuclease Cas6 1 (cas6a).